The primary structure comprises 657 residues: Single-minded homolog 2 (657 aa).

The bHLH domain occupies 1–53 (MKEKSKNAAKTRREKENGEFYELAKLLPLPSAITSQLDKASIIRLTTSYLKMR). 2 PAS domains span residues 77–147 (AKEL…PPLH) and 218–288 (PPSA…LVKG). Positions 218-288 (PPSAITEIKL…YAHHLLLVKG (71 aa)) constitute a PAC domain. In terms of domain architecture, Single-minded C-terminal spans 336-657 (EYKELQLSLD…GASVIITNGR (322 aa)). Residues 354–364 (ESWRTTLSTSQ) are compositionally biased toward polar residues. Disordered regions lie at residues 354–387 (ESWR…NPYP) and 612–641 (LGSA…APGA). The Nuclear localization signal motif lies at 367-386 (RKSAKPKNTKMKTKLRTNPY). A compositionally biased stretch (basic residues) spans 369–381 (SAKPKNTKMKTKL).

As to quaternary structure, efficient DNA binding requires dimerization with another bHLH protein. Heterodimer of SIM2 and ARNT. As to expression, transcripts were detected in high levels in kidney followed by skeletal muscle and lung. Low levels were found in testis, brain and heart. In early fetal development it is found in CNS, developing kidney, tongue epithelium and cartilage primordia.

It localises to the nucleus. Transcription factor that may be a master gene of CNS development in cooperation with Arnt. It may have pleiotropic effects in the tissues expressed during development. In Mus musculus (Mouse), this protein is Single-minded homolog 2 (Sim2).